The primary structure comprises 520 residues: Hydroxymethylglutaryl-CoA synthase, cytoplasmic (520 aa).

Position 4 is a phosphoserine (serine 4). The (3S)-3-hydroxy-3-methylglutaryl-CoA site is built by aspartate 43 and alanine 44. 44–46 (AGK) lines the CoA pocket. Position 46 is an N6-acetyllysine (lysine 46). Residue glutamate 95 is the Proton donor/acceptor of the active site. Positions 129, 167, 171, 221, and 264 each coordinate (3S)-3-hydroxy-3-methylglutaryl-CoA. Cysteine 129 functions as the Acyl-thioester intermediate in the catalytic mechanism. Residue asparagine 167 participates in CoA binding. Serine 221 is a CoA binding site. Catalysis depends on histidine 264, which acts as the Proton donor/acceptor. CoA contacts are provided by lysine 269 and lysine 273. The (3S)-3-hydroxy-3-methylglutaryl-CoA site is built by lysine 273, asparagine 343, and serine 377. The residue at position 273 (lysine 273) is an N6-acetyllysine. A disordered region spans residues 487 to 520 (NTATEHIPSPAKKVPRLPATSGEPESAVISNGEH). A phosphoserine mark is found at serine 495 and serine 516.

The protein belongs to the thiolase-like superfamily. HMG-CoA synthase family. In terms of assembly, homodimer.

The protein localises to the cytoplasm. It carries out the reaction acetoacetyl-CoA + acetyl-CoA + H2O = (3S)-3-hydroxy-3-methylglutaryl-CoA + CoA + H(+). The protein operates within metabolic intermediate biosynthesis; (R)-mevalonate biosynthesis; (R)-mevalonate from acetyl-CoA: step 2/3. In terms of biological role, catalyzes the condensation of acetyl-CoA with acetoacetyl-CoA to form HMG-CoA, which is converted by HMG-CoA reductase (HMGCR) into mevalonate, a precursor for cholesterol synthesis. The chain is Hydroxymethylglutaryl-CoA synthase, cytoplasmic from Rattus norvegicus (Rat).